The primary structure comprises 780 residues: Subtilisin-like protease SBT1.3 (780 aa).

The signal sequence occupies residues 1–25 (MANKNPLQKPFLFIILSINLIFLQA). Residues 26-120 (ETTTQISTKK…VIPETRYELH (95 aa)) constitute a propeptide, activation peptide. An Inhibitor I9 domain is found at 36-120 (TYVIHMDKSA…VIPETRYELH (85 aa)). A Peptidase S8 domain is found at 116 to 628 (RYELHTTRSP…AGHIDPLRAT (513 aa)). D154 (charge relay system) is an active-site residue. The N-linked (GlcNAc...) asparagine glycan is linked to N165. The Charge relay system role is filled by H227. Residues 384-477 (KQYPLVYLGR…GEKEGKLIKQ (94 aa)) enclose the PA domain. N394 is a glycosylation site (N-linked (GlcNAc...) asparagine). The active-site Charge relay system is the S560. N-linked (GlcNAc...) asparagine glycosylation is found at N663 and N731.

Belongs to the peptidase S8 family.

Its subcellular location is the secreted. The chain is Subtilisin-like protease SBT1.3 from Arabidopsis thaliana (Mouse-ear cress).